Consider the following 680-residue polypeptide: Tumor protein 63 (680 aa).

Residues 1 to 107 form a transcription activation region; it reads MNFETSRCAT…MQDSDLSDPM (107 aa). Residues 123-157 are compositionally biased toward polar residues; that stretch reads QIQNGSSSTSPYNTDHAQNSVTAPSPYAQPSSTFD. The interval 123–171 is disordered; it reads QIQNGSSSTSPYNTDHAQNSVTAPSPYAQPSSTFDALSPSPAIPSNTDY. Residues 170–362 mediate DNA binding; that stretch reads DYPGPHSFDV…KADEDSIRKQ (193 aa). Zn(2+) is bound by residues Cys-244, His-247, Cys-308, and Cys-312. The span at 351-360 shows a compositional bias: basic and acidic residues; that stretch reads DRKADEDSIR. Disordered stretches follow at residues 351–393 and 435–472; these read DRKA…IKKR and YRQQQQQQHQHLLQKQTSIQSPSSYGNSSPPLNKMNSM. The tract at residues 352-388 is interaction with HIPK2; the sequence is RKADEDSIRKQQVSDSTKNGDGTKRPFRQNTHGIQMT. Polar residues-rich tracts occupy residues 361-371 and 379-389; these read KQQVSDSTKNG and RQNTHGIQMTS. The tract at residues 394 to 443 is oligomerization; sequence RSPDDELLYLPVRGRETYEMLLKIKESLELMQYLPQHTIETYRQQQQQQH. The segment covering 437–450 has biased composition (low complexity); that stretch reads QQQQQQHQHLLQKQ. Over residues 451–472 the composition is skewed to polar residues; sequence TSIQSPSSYGNSSPPLNKMNSM. The 67-residue stretch at 541-607 folds into the SAM domain; that stretch reads PPYPTDCSIV…WKGILDHRQL (67 aa). Residues 610-680 are transactivation inhibition; it reads FSSPSHLLRT…KQQRIKEEGE (71 aa). A Glycyl lysine isopeptide (Lys-Gly) (interchain with G-Cter in SUMO) cross-link involves residue Lys-676.

The protein belongs to the p53 family. As to quaternary structure, binds DNA as a homotetramer. Isoform composition of the tetramer may determine transactivation activity. Isoforms Alpha and Gamma interact with HIPK2. Interacts with SSRP1, leading to stimulate coactivator activity. Isoform 1 and isoform 2 interact with WWP1. Interacts with PDS5A. Isoform 5 (via activation domain) interacts with NOC2L. Zn(2+) serves as cofactor. May be sumoylated. Post-translationally, ubiquitinated. Polyubiquitination involves WWP1 and leads to proteasomal degradation of this protein. In terms of tissue distribution, widely expressed, notably in heart, kidney, placenta, prostate, skeletal muscle, testis and thymus, although the precise isoform varies according to tissue type. Progenitor cell layers of skin, breast, eye and prostate express high levels of DeltaN-type isoforms. Isoform 10 is predominantly expressed in skin squamous cell carcinomas, but not in normal skin tissues.

It localises to the nucleus. Its function is as follows. Acts as a sequence specific DNA binding transcriptional activator or repressor. The isoforms contain a varying set of transactivation and auto-regulating transactivation inhibiting domains thus showing an isoform specific activity. Isoform 2 activates RIPK4 transcription. May be required in conjunction with TP73/p73 for initiation of p53/TP53 dependent apoptosis in response to genotoxic insults and the presence of activated oncogenes. Involved in Notch signaling by probably inducing JAG1 and JAG2. Plays a role in the regulation of epithelial morphogenesis. The ratio of DeltaN-type and TA*-type isoforms may govern the maintenance of epithelial stem cell compartments and regulate the initiation of epithelial stratification from the undifferentiated embryonal ectoderm. Required for limb formation from the apical ectodermal ridge. Activates transcription of the p21 promoter. The polypeptide is Tumor protein 63 (TP63) (Homo sapiens (Human)).